The primary structure comprises 314 residues: 4-hydroxy-3-methylbut-2-enyl diphosphate reductase (314 aa).

C18 lines the [4Fe-4S] cluster pocket. H47 and H80 together coordinate (2E)-4-hydroxy-3-methylbut-2-enyl diphosphate. H47 and H80 together coordinate dimethylallyl diphosphate. Isopentenyl diphosphate-binding residues include H47 and H80. C102 provides a ligand contact to [4Fe-4S] cluster. Residue H130 coordinates (2E)-4-hydroxy-3-methylbut-2-enyl diphosphate. H130 is a dimethylallyl diphosphate binding site. Residue H130 participates in isopentenyl diphosphate binding. E132 acts as the Proton donor in catalysis. T171 contributes to the (2E)-4-hydroxy-3-methylbut-2-enyl diphosphate binding site. [4Fe-4S] cluster is bound at residue C201. Positions 229, 230, 231, and 273 each coordinate (2E)-4-hydroxy-3-methylbut-2-enyl diphosphate. Residues S229, S230, N231, and S273 each coordinate dimethylallyl diphosphate. Isopentenyl diphosphate-binding residues include S229, S230, N231, and S273.

Belongs to the IspH family. [4Fe-4S] cluster is required as a cofactor.

The enzyme catalyses isopentenyl diphosphate + 2 oxidized [2Fe-2S]-[ferredoxin] + H2O = (2E)-4-hydroxy-3-methylbut-2-enyl diphosphate + 2 reduced [2Fe-2S]-[ferredoxin] + 2 H(+). The catalysed reaction is dimethylallyl diphosphate + 2 oxidized [2Fe-2S]-[ferredoxin] + H2O = (2E)-4-hydroxy-3-methylbut-2-enyl diphosphate + 2 reduced [2Fe-2S]-[ferredoxin] + 2 H(+). It participates in isoprenoid biosynthesis; dimethylallyl diphosphate biosynthesis; dimethylallyl diphosphate from (2E)-4-hydroxy-3-methylbutenyl diphosphate: step 1/1. The protein operates within isoprenoid biosynthesis; isopentenyl diphosphate biosynthesis via DXP pathway; isopentenyl diphosphate from 1-deoxy-D-xylulose 5-phosphate: step 6/6. Its function is as follows. Catalyzes the conversion of 1-hydroxy-2-methyl-2-(E)-butenyl 4-diphosphate (HMBPP) into a mixture of isopentenyl diphosphate (IPP) and dimethylallyl diphosphate (DMAPP). Acts in the terminal step of the DOXP/MEP pathway for isoprenoid precursor biosynthesis. The polypeptide is 4-hydroxy-3-methylbut-2-enyl diphosphate reductase (Phenylobacterium zucineum (strain HLK1)).